A 225-amino-acid chain; its full sequence is Ribosomal RNA small subunit methyltransferase G (225 aa).

S-adenosyl-L-methionine contacts are provided by residues G96, F101, 146–147, and R160; that span reads AE.

Belongs to the methyltransferase superfamily. RNA methyltransferase RsmG family.

The protein localises to the cytoplasm. Functionally, specifically methylates the N7 position of a guanine in 16S rRNA. The polypeptide is Ribosomal RNA small subunit methyltransferase G (Mycoplasma mobile (strain ATCC 43663 / 163K / NCTC 11711) (Mesomycoplasma mobile)).